Reading from the N-terminus, the 287-residue chain is uncharacterized protein (287 aa).

GTP-binding positions include 43 to 50 (GKTGVGKS), 90 to 93 (DLPG), and 156 to 159 (DKAE). Residues 48 to 138 (GKSSLCNALF…LTVDEHFYHQ (91 aa)) enclose the G domain.

The protein to E.coli YfjP and YeeP.

This is an uncharacterized protein from Escherichia coli (strain K12).